We begin with the raw amino-acid sequence, 257 residues long: Taurine import ATP-binding protein TauB (257 aa).

Residues 6–233 (LDKISIHYDG…RYAAGEPIRA (228 aa)) enclose the ABC transporter domain. Residue 38 to 45 (GRSGCGKT) coordinates ATP.

The protein belongs to the ABC transporter superfamily. Taurine importer (TC 3.A.1.17.1) family. As to quaternary structure, the complex is composed of two ATP-binding proteins (TauB), two transmembrane proteins (TauC) and a solute-binding protein (TauA).

Its subcellular location is the cell inner membrane. The enzyme catalyses taurine(out) + ATP + H2O = taurine(in) + ADP + phosphate + H(+). Functionally, part of the ABC transporter complex TauABC involved in taurine import. Responsible for energy coupling to the transport system. This Mesorhizobium japonicum (strain LMG 29417 / CECT 9101 / MAFF 303099) (Mesorhizobium loti (strain MAFF 303099)) protein is Taurine import ATP-binding protein TauB.